The chain runs to 85 residues: UPF0410 protein YdaS (85 aa).

The next 3 membrane-spanning stretches (helical) occupy residues 2-22 (LSFL…SAIV), 28-48 (GGIF…HGLL), and 58-78 (FAIF…GLIF).

It belongs to the UPF0410 family.

It localises to the cell membrane. The protein is UPF0410 protein YdaS (ydaS) of Bacillus subtilis (strain 168).